The sequence spans 297 residues: MFSRAGVAGLSAWTLQPQWIQVRNMATLKDITRRLKSIKNIQKITKSMKMVAAAKYARAERELKPARIYGLGSLALYEKADIKGPEDKKKHLLIGVSSDRGLCGAIHSSIAKQMKSEVATLTAAGKEVMLVGVGDKIRGILYRTHSDQFLVAFKEVGRKPPTFGDASVIALELLNSGYEFDEGSIIFNKFRSVISYKTEEKPIFSLNTVASADSMSIYDDIDADVLQNYQEYNLANIIYYSLKESTTSEQSARMTAMDNASKNASEMIDKLTLTFNRTRQAVITKELIEIISGAAAL.

The N-terminal 25 residues, 1–25, are a transit peptide targeting the mitochondrion; that stretch reads MFSRAGVAGLSAWTLQPQWIQVRNM. K39 carries the N6-acetyllysine modification. An N6-succinyllysine modification is found at K49. K55 carries the N6-acetyllysine modification. Residue K115 is modified to N6-acetyllysine; alternate. Position 115 is an N6-succinyllysine; alternate (K115). Residue S146 is modified to Phosphoserine. K154 bears the N6-acetyllysine; alternate mark. N6-succinyllysine; alternate is present on K154. An N6-acetyllysine modification is found at K197. An N6-succinyllysine modification is found at K270.

This sequence belongs to the ATPase gamma chain family. In terms of assembly, component of the ATP synthase complex composed at least of ATP5F1A/subunit alpha, ATP5F1B/subunit beta, ATP5MC1/subunit c (homooctomer), MT-ATP6/subunit a, MT-ATP8/subunit 8, ATP5ME/subunit e, ATP5MF/subunit f, ATP5MG/subunit g, ATP5MK/subunit k, ATP5MJ/subunit j, ATP5F1C/subunit gamma, ATP5F1D/subunit delta, ATP5F1E/subunit epsilon, ATP5PF/subunit F6, ATP5PB/subunit b, ATP5PD/subunit d, ATP5PO/subunit OSCP. ATP synthase complex consists of a soluble F(1) head domain (subunits alpha(3) and beta(3)) - the catalytic core - and a membrane F(0) domain - the membrane proton channel (subunits c, a, 8, e, f, g, k and j). These two domains are linked by a central stalk (subunits gamma, delta, and epsilon) rotating inside the F1 region and a stationary peripheral stalk (subunits F6, b, d, and OSCP). Interacts with FLVCR2; this interaction occurs in the absence of heme and is disrupted upon heme binding.

It is found in the mitochondrion inner membrane. Functionally, subunit gamma, of the mitochondrial membrane ATP synthase complex (F(1)F(0) ATP synthase or Complex V) that produces ATP from ADP in the presence of a proton gradient across the membrane which is generated by electron transport complexes of the respiratory chain. ATP synthase complex consist of a soluble F(1) head domain - the catalytic core - and a membrane F(1) domain - the membrane proton channel. These two domains are linked by a central stalk rotating inside the F(1) region and a stationary peripheral stalk. During catalysis, ATP synthesis in the catalytic domain of F(1) is coupled via a rotary mechanism of the central stalk subunits to proton translocation. In vivo, can only synthesize ATP although its ATP hydrolase activity can be activated artificially in vitro. With the central stalk subunit delta, is essential for the biogenesis of F(1) catalytic part of the ATP synthase complex namely in the formation of F1 assembly intermediate. This Pongo abelii (Sumatran orangutan) protein is ATP synthase F(1) complex subunit gamma, mitochondrial.